A 415-amino-acid polypeptide reads, in one-letter code: Beta-1,4-glucuronyltransferase 1 (415 aa).

The Cytoplasmic portion of the chain corresponds to 1–8; sequence MQMSYAIR. A helical; Signal-anchor for type II membrane protein membrane pass occupies residues 9–36; sequence CAFYQLLLAALMLVAMLQLLYLSLLSGL. The Lumenal portion of the chain corresponds to 37-415; it reads HGQEEQDQYF…AKYPNSPRRC (379 aa). Residue Asn-204 is glycosylated (N-linked (GlcNAc...) asparagine). Residues Asp-227 and Asp-229 each coordinate Mn(2+). Asn-300 carries an N-linked (GlcNAc...) asparagine glycan.

This sequence belongs to the glycosyltransferase 49 family. As to quaternary structure, interacts with LARGE1 and LARGE2. Requires Mn(2+) as cofactor. In the adult, highly expressed in heart, brain, skeletal muscle and kidney and to a lesser extent in placenta, pancreas, spleen, prostate, testis, ovary, small intestine and colon. Very weak expression in lung, liver, thymus and peripheral blood leukocytes. In fetal highly expressed in brain and kidney and to a lesser extent in lung and liver.

The protein localises to the golgi apparatus membrane. The enzyme catalyses 3-O-[beta-D-Xyl-(1-&gt;4)-Rib-ol-P-Rib-ol-P-3-beta-D-GalNAc-(1-&gt;3)-beta-D-GlcNAc-(1-&gt;4)-(O-6-P-alpha-D-Man)]-Thr-[protein] + UDP-alpha-D-glucuronate = 3-O-[beta-D-GlcA-(1-&gt;3)-beta-D-Xyl-(1-&gt;4)-Rib-ol-P-Rib-ol-P-3-beta-D-GalNAc-(1-&gt;3)-beta-D-GlcNAc-(1-&gt;4)-(O-6-P-alpha-D-Man)]-Thr-[protein] + UDP + H(+). Its pathway is protein modification; protein glycosylation. Its function is as follows. Beta-1,4-glucuronyltransferase involved in O-mannosylation of alpha-dystroglycan (DAG1). Transfers a glucuronic acid (GlcA) residue onto a xylose (Xyl) acceptor to produce the glucuronyl-beta-1,4-xylose-beta disaccharide primer, which is further elongated by LARGE1, during synthesis of phosphorylated O-mannosyl glycan. Phosphorylated O-mannosyl glycan is a carbohydrate structure present in alpha-dystroglycan (DAG1), which is required for binding laminin G-like domain-containing extracellular proteins with high affinity. Required for axon guidance; via its function in O-mannosylation of alpha-dystroglycan (DAG1). The sequence is that of Beta-1,4-glucuronyltransferase 1 from Homo sapiens (Human).